The following is a 472-amino-acid chain: Cysteine--tRNA ligase (472 aa).

C28 is a binding site for Zn(2+). The 'HIGH' region motif lies at P30–H40. Zn(2+)-binding residues include C207, H232, and E236. The 'KMSKS' region motif lies at K264–S268. K267 contributes to the ATP binding site.

Belongs to the class-I aminoacyl-tRNA synthetase family. Requires Zn(2+) as cofactor.

The protein localises to the cytoplasm. The enzyme catalyses tRNA(Cys) + L-cysteine + ATP = L-cysteinyl-tRNA(Cys) + AMP + diphosphate. The chain is Cysteine--tRNA ligase (cysS) from Aeropyrum pernix (strain ATCC 700893 / DSM 11879 / JCM 9820 / NBRC 100138 / K1).